The following is a 277-amino-acid chain: Sulfur carrier protein FdhD (277 aa).

Residue Cys121 is the Cysteine persulfide intermediate of the active site. 260–265 (FCKPGR) serves as a coordination point for Mo-bis(molybdopterin guanine dinucleotide).

It belongs to the FdhD family.

It is found in the cytoplasm. Its function is as follows. Required for formate dehydrogenase (FDH) activity. Acts as a sulfur carrier protein that transfers sulfur from IscS to the molybdenum cofactor prior to its insertion into FDH. The sequence is that of Sulfur carrier protein FdhD from Escherichia coli O81 (strain ED1a).